We begin with the raw amino-acid sequence, 423 residues long: UPF0229 protein Pfl01_5140 (423 aa).

The disordered stretch occupies residues 83–108 (TAGEHIARPPGGGGGRGPGKAGNSGE). The segment covering 92–107 (PGGGGGRGPGKAGNSG) has biased composition (gly residues).

This sequence belongs to the UPF0229 family.

The sequence is that of UPF0229 protein Pfl01_5140 from Pseudomonas fluorescens (strain Pf0-1).